The chain runs to 68 residues: Probable Sec-independent protein translocase protein TatE (68 aa).

Residues 1 to 21 form a helical membrane-spanning segment; that stretch reads MGEISITKLLVVAALIILVFG. A disordered region spans residues 43 to 68; that stretch reads MNEDDDSAKKTTAEEEAPAQKLSHKE.

It belongs to the TatA/E family. TatE subfamily.

It localises to the cell inner membrane. Part of the twin-arginine translocation (Tat) system that transports large folded proteins containing a characteristic twin-arginine motif in their signal peptide across membranes. TatE shares overlapping functions with TatA. This is Probable Sec-independent protein translocase protein TatE from Klebsiella pneumoniae subsp. pneumoniae (strain ATCC 700721 / MGH 78578).